The chain runs to 132 residues: Tumor suppressor ARF (132 aa).

The interaction with CDK5RAP3 and MDM2 stretch occupies residues 1 to 64 (MVRRFLVTLR…LGQQPLPRRP (64 aa)). A disordered region spans residues 56 to 132 (GQQPLPRRPG…CLGPSARGPG (77 aa)). Over residues 71-83 (RPSGGAAAAPRRG) the composition is skewed to low complexity. Basic residues predominate over residues 84–99 (AQLRRPRHSHPTRARR). The span at 103-117 (GLPGHAGGAAPGRGA) shows a compositional bias: gly residues.

In terms of assembly, does not interact with cyclins, CDK1, CDK2, CDK4, CDK5 or CDK6. Binds to BCL6, E2F1, HUWE1, MDM2, MYC, NPM1/B23, TOP1/TOPOI and UBE2I/UBC9. Interacts with TBRG1 and COMMD1. Interacts with CDKN2AIP and E4F1. Interacts with CDK5RAP3 and MDM2; form a ternary complex involved in regulation of p53/TP53. Interacts with NOP53; the interaction is direct and promotes ARF nucleoplasmic relocalization and ubiquitin-mediated proteasomal degradation. Interacts with TTF1 (via the N-terminal region (NRD) and a C-terminal region); the interaction is direct and inhibits the nucleolar localization of TTF1. As to quaternary structure, interacts with C1QBP. Ubiquitinated in normal cells by TRIP12 via the ubiquitin fusion degradation (UFD) pathway, a process that mediates ubiquitination at the N-terminus, regardless of the absence of lysine residues. Ubiquitination leads to its proteasomal degradation. In cancer cells, however, TRIP12 is located in a different cell compartment, preventing ubiquitination and degradation.

It is found in the nucleus. The protein resides in the nucleolus. Its subcellular location is the nucleoplasm. It localises to the mitochondrion. Its function is as follows. Capable of inducing cell cycle arrest in G1 and G2 phases. Acts as a tumor suppressor. Binds to MDM2 and blocks its nucleocytoplasmic shuttling by sequestering it in the nucleolus. This inhibits the oncogenic action of MDM2 by blocking MDM2-induced degradation of p53 and enhancing p53-dependent transactivation and apoptosis. Also induces G2 arrest and apoptosis in a p53-independent manner by preventing the activation of cyclin B1/CDC2 complexes. Binds to BCL6 and down-regulates BCL6-induced transcriptional repression. Binds to E2F1 and MYC and blocks their transcriptional activator activity but has no effect on MYC transcriptional repression. Binds to TOP1/TOPOI and stimulates its activity. This complex binds to rRNA gene promoters and may play a role in rRNA transcription and/or maturation. Interacts with NPM1/B23 and promotes its polyubiquitination and degradation, thus inhibiting rRNA processing. Plays a role in inhibiting ribosome biogenesis, perhaps by binding to the nucleolar localization sequence of transcription termination factor TTF1, and thereby preventing nucleolar localization of TTF1. Interacts with COMMD1 and promotes its 'Lys63'-linked polyubiquitination. Interacts with UBE2I/UBC9 and enhances sumoylation of a number of its binding partners including MDM2 and E2F1. Binds to HUWE1 and represses its ubiquitin ligase activity. May play a role in controlling cell proliferation and apoptosis during mammary gland development. In terms of biological role, may be involved in regulation of autophagy and caspase-independent cell death; the short-lived mitochondrial isoform is stabilized by C1QBP. In Homo sapiens (Human), this protein is Tumor suppressor ARF.